The chain runs to 150 residues: MHIWVDADACPAVIKDILFRAAQRWQRPLTLVANQMLRTPPSPLIRAIQVPRGFDVADGYIVEHAGSGDLVITGDIPLAAQVLEKQALVLSPRGERYTADTIRERLSMRDMMEELRSAGIDTGGPAAFSQADRRAFANALDRLMLASARA.

The protein belongs to the UPF0178 family.

The sequence is that of UPF0178 protein Bpet3884 from Bordetella petrii (strain ATCC BAA-461 / DSM 12804 / CCUG 43448).